The primary structure comprises 149 residues: Transcriptional regulator MraZ (149 aa).

2 consecutive SpoVT-AbrB domains span residues 6 to 52 (RSHR…PYPD) and 81 to 124 (AEEM…DQSK).

This sequence belongs to the MraZ family. As to quaternary structure, forms oligomers.

The protein localises to the cytoplasm. The protein resides in the nucleoid. This is Transcriptional regulator MraZ from Nitratidesulfovibrio vulgaris (strain ATCC 29579 / DSM 644 / CCUG 34227 / NCIMB 8303 / VKM B-1760 / Hildenborough) (Desulfovibrio vulgaris).